Here is a 939-residue protein sequence, read N- to C-terminus: Translation initiation factor IF-2 (939 aa).

Positions 48–355 (KFAPAPKVEN…KPEKKEKEEE (308 aa)) are disordered. Positions 79 to 93 (QQNQAPKQPQQGTQN) are enriched in low complexity. A compositionally biased stretch (basic and acidic residues) spans 114–130 (SRDKNSRRDNNNRDGQR). Residues 131 to 257 (DNNGGYRNND…NNDRNNNGGF (127 aa)) show a composition bias toward low complexity. Residues 287 to 355 (RNNDRRDSAP…KPEKKEKEEE (69 aa)) show a composition bias toward basic and acidic residues. In terms of domain architecture, tr-type G spans 440 to 609 (PRPPVVCVMG…LLTAEVNELK (170 aa)). The interval 449 to 456 (GHVDHGKT) is G1. Position 449–456 (449–456 (GHVDHGKT)) interacts with GTP. Positions 474 to 478 (GITQK) are G2. Residues 495–498 (DTPG) are G3. GTP-binding positions include 495–499 (DTPGH) and 549–552 (NKID). Residues 549–552 (NKID) form a G4 region. Residues 585-587 (SAH) form a G5 region.

It belongs to the TRAFAC class translation factor GTPase superfamily. Classic translation factor GTPase family. IF-2 subfamily.

The protein resides in the cytoplasm. Its function is as follows. One of the essential components for the initiation of protein synthesis. Protects formylmethionyl-tRNA from spontaneous hydrolysis and promotes its binding to the 30S ribosomal subunits. Also involved in the hydrolysis of GTP during the formation of the 70S ribosomal complex. This is Translation initiation factor IF-2 from Lachnospira eligens (strain ATCC 27750 / DSM 3376 / VPI C15-48 / C15-B4) (Eubacterium eligens).